Reading from the N-terminus, the 347-residue chain is UDP-3-O-acylglucosamine N-acyltransferase 1 (347 aa).

H246 serves as the catalytic Proton acceptor.

Belongs to the transferase hexapeptide repeat family. LpxD subfamily. Homotrimer.

The enzyme catalyses a UDP-3-O-[(3R)-3-hydroxyacyl]-alpha-D-glucosamine + a (3R)-hydroxyacyl-[ACP] = a UDP-2-N,3-O-bis[(3R)-3-hydroxyacyl]-alpha-D-glucosamine + holo-[ACP] + H(+). The protein operates within bacterial outer membrane biogenesis; LPS lipid A biosynthesis. In terms of biological role, catalyzes the N-acylation of UDP-3-O-acylglucosamine using 3-hydroxyacyl-ACP as the acyl donor. Is involved in the biosynthesis of lipid A, a phosphorylated glycolipid that anchors the lipopolysaccharide to the outer membrane of the cell. The sequence is that of UDP-3-O-acylglucosamine N-acyltransferase 1 from Francisella tularensis subsp. tularensis (strain SCHU S4 / Schu 4).